Reading from the N-terminus, the 178-residue chain is Adenine phosphoribosyltransferase (178 aa).

It belongs to the purine/pyrimidine phosphoribosyltransferase family. In terms of assembly, homodimer.

Its subcellular location is the cytoplasm. The enzyme catalyses AMP + diphosphate = 5-phospho-alpha-D-ribose 1-diphosphate + adenine. It participates in purine metabolism; AMP biosynthesis via salvage pathway; AMP from adenine: step 1/1. Catalyzes a salvage reaction resulting in the formation of AMP, that is energically less costly than de novo synthesis. The protein is Adenine phosphoribosyltransferase of Erythrobacter litoralis (strain HTCC2594).